A 1706-amino-acid chain; its full sequence is Histone acetyltransferase HAC12 (1706 aa).

Disordered stretches follow at residues 1 to 33, 251 to 284, 397 to 456, and 524 to 543; these read MNVQ…MQNL, TNNN…NSHM, VSRV…LGKT, and QNSQ…SDSS. Positions 397 to 406 are enriched in polar residues; that stretch reads VSRVNSSLSH. The segment covering 407 to 434 has biased composition (low complexity); the sequence is QQQFQQPPNRFQQQPNQIQQQQQQFLNQ. Residues 637-716 form a TAZ-type 1 zinc finger; it reads HDPKFKNQQR…DPRCPVCVPV (80 aa). The interval 791-909 is disordered; it reads TESCKSSIVS…PELTSKSRKP (119 aa). A compositionally biased stretch (polar residues) spans 794-805; sequence CKSSIVSTTEAD. Composition is skewed to basic and acidic residues over residues 809-829 and 870-896; these read DAER…KVEI and PKQE…KEEL. The PHD-type zinc finger occupies 998–1075; the sequence is HYFCIPCYNE…EYTCPYCYVI (78 aa). Positions 1090–1526 constitute a CBP/p300-type HAT domain; that stretch reads VLGAKDLPRT…VLYHLHNPTA (437 aa). Residues 1213–1215, 1232–1233, and Trp1288 each bind acetyl-CoA; these read LDS and RT. 2 ZZ-type zinc fingers span residues 1408 to 1471 and 1528 to 1581; these read HLQH…IADI and AFVT…SLAD. The Zn(2+) site is built by Cys1413, Cys1416, Cys1428, Cys1431, Cys1437, Cys1440, His1453, His1461, Cys1533, Cys1536, Cys1548, Cys1551, Cys1557, Cys1560, His1569, and His1571. Residues 1588 to 1671 form a TAZ-type 2 zinc finger; that stretch reads EARQLRVLQL…ECDVPRCGDL (84 aa).

It is found in the nucleus. The catalysed reaction is L-lysyl-[protein] + acetyl-CoA = N(6)-acetyl-L-lysyl-[protein] + CoA + H(+). Functionally, acetyltransferase enzyme. Acetylates histones, giving a specific tag for transcriptional activation. This chain is Histone acetyltransferase HAC12 (HAC12), found in Arabidopsis thaliana (Mouse-ear cress).